We begin with the raw amino-acid sequence, 344 residues long: Prickle-like protein 4 (344 aa).

One can recognise a PET domain in the interval Met1–Gly81. 2 consecutive LIM zinc-binding domains span residues His82–Pro147 and Arg148–Asp207. Residues Gly253 to Cys344 are disordered. The segment covering Gln257 to Asn271 has biased composition (polar residues). Over residues Arg272–Asp296 the composition is skewed to basic and acidic residues. Residues Ser322–Cys344 are compositionally biased toward polar residues.

Belongs to the prickle / espinas / testin family. As to expression, expressed in a broad range of normal tissues as well as in hepatocellular carcinoma, breast cancer and prostate cancer tissues.

The protein is Prickle-like protein 4 (PRICKLE4) of Homo sapiens (Human).